Consider the following 487-residue polypeptide: Meiotic recombination protein SPO11-4 (487 aa).

The interval 1 to 56 (MDDSTDDDSYHPRKHYAYDRQVSSSRWRTSREYIRGPGPETHTTESAQDGQDPPAG) is disordered. The 134-residue stretch at 119–252 (KSRVEARKTL…LGIIAAEKGI (134 aa)) folds into the Topo IIA-type catalytic domain. Tyr213 functions as the O-(5'-phospho-DNA)-tyrosine intermediate in the catalytic mechanism. Mg(2+) is bound by residues Glu301 and Asp353.

Belongs to the TOP6A family. Homodimer. Interacts with TOP6B. The cofactor is Mg(2+).

The protein localises to the nucleus. The catalysed reaction is ATP-dependent breakage, passage and rejoining of double-stranded DNA.. Required for meiotic recombination. Mediates DNA cleavage that forms the double-strand breaks (DSB) that initiate meiotic recombination. Possesses double-stranded DNA cleavage activity in vitro. The protein is Meiotic recombination protein SPO11-4 (SPO11-4) of Oryza sativa subsp. japonica (Rice).